The sequence spans 342 residues: Protein-glutamate methylesterase/protein-glutamine glutaminase 1 (342 aa).

Positions 2-119 (RVAIVNDMPL…GDPKAAAQRL (118 aa)) constitute a Response regulatory domain. At Asp53 the chain carries 4-aspartylphosphate. The region spanning 146–329 (SDTDAALVVI…LPLGDIAPRL (184 aa)) is the CheB-type methylesterase domain. Active-site residues include Ser158, His185, and Asp278.

This sequence belongs to the CheB family. In terms of processing, phosphorylated by CheA. Phosphorylation of the N-terminal regulatory domain activates the methylesterase activity.

Its subcellular location is the cytoplasm. The catalysed reaction is [protein]-L-glutamate 5-O-methyl ester + H2O = L-glutamyl-[protein] + methanol + H(+). The enzyme catalyses L-glutaminyl-[protein] + H2O = L-glutamyl-[protein] + NH4(+). In terms of biological role, involved in chemotaxis. Part of a chemotaxis signal transduction system that modulates chemotaxis in response to various stimuli. Catalyzes the demethylation of specific methylglutamate residues introduced into the chemoreceptors (methyl-accepting chemotaxis proteins or MCP) by CheR. Also mediates the irreversible deamidation of specific glutamine residues to glutamic acid. This Bordetella avium (strain 197N) protein is Protein-glutamate methylesterase/protein-glutamine glutaminase 1.